Reading from the N-terminus, the 50-residue chain is Peroxiredoxin-6 (50 aa).

Positions 1–50 (DFTPVCTTELGRLAPEFAKRVVFIFGPDKKLKLSILYPATTGRNFDEILR) constitute a Thioredoxin domain. T3 is modified (phosphothreonine). Catalysis depends on C6, which acts as the Cysteine sulfenic acid (-SOH) intermediate; for peroxidase activity. N6-acetyllysine is present on K19. The active-site For phospholipase activity is the D28.

It belongs to the peroxiredoxin family. Prx6 subfamily. In terms of assembly, homodimer. Interacts with GSTP1; mediates PRDX6 glutathionylation and regeneration. Interacts with APEX1. Interacts with STH. May interact with FAM168B. May interact with HTR2A. Post-translationally, irreversibly inactivated by overoxidation of Cys-6 to sulfinic acid (Cys-SO(2)H) and sulfonic acid (Cys-SO(3)H) forms upon oxidative stress. In terms of processing, phosphorylation at Thr-177 by MAP kinases increases the phospholipase activity of the enzyme. The phosphorylated form exhibits a greater lysophosphatidylcholine acyltransferase activity compared to the non-phosphorylated form.

It localises to the cytoplasm. The protein resides in the lysosome. It carries out the reaction a hydroperoxide + 2 glutathione = an alcohol + glutathione disulfide + H2O. The catalysed reaction is a 1,2-diacyl-sn-glycero-3-phosphocholine + H2O = a 1-acyl-sn-glycero-3-phosphocholine + a fatty acid + H(+). It catalyses the reaction a 1-acyl-sn-glycero-3-phosphocholine + an acyl-CoA = a 1,2-diacyl-sn-glycero-3-phosphocholine + CoA. The enzyme catalyses 1-hexadecanoyl-sn-glycero-3-phosphocholine + hexadecanoyl-CoA = 1,2-dihexadecanoyl-sn-glycero-3-phosphocholine + CoA. It carries out the reaction 1,2-dihexadecanoyl-sn-glycero-3-phosphocholine + H2O = 1-hexadecanoyl-sn-glycero-3-phosphocholine + hexadecanoate + H(+). Thiol-specific peroxidase that catalyzes the reduction of hydrogen peroxide and organic hydroperoxides to water and alcohols, respectively. Can reduce H(2)O(2) and short chain organic, fatty acid, and phospholipid hydroperoxides. Also has phospholipase activity, and can therefore either reduce the oxidized sn-2 fatty acyl group of phospholipids (peroxidase activity) or hydrolyze the sn-2 ester bond of phospholipids (phospholipase activity). These activities are dependent on binding to phospholipids at acidic pH and to oxidized phospholipds at cytosolic pH. Plays a role in cell protection against oxidative stress by detoxifying peroxides and in phospholipid homeostasis. Exhibits acyl-CoA-dependent lysophospholipid acyltransferase which mediates the conversion of lysophosphatidylcholine (1-acyl-sn-glycero-3-phosphocholine or LPC) into phosphatidylcholine (1,2-diacyl-sn-glycero-3-phosphocholine or PC). Shows a clear preference for LPC as the lysophospholipid and for palmitoyl CoA as the fatty acyl substrate. The protein is Peroxiredoxin-6 of Mesocricetus auratus (Golden hamster).